Here is a 172-residue protein sequence, read N- to C-terminus: Adenine phosphoribosyltransferase (172 aa).

This sequence belongs to the purine/pyrimidine phosphoribosyltransferase family. Homodimer.

The protein resides in the cytoplasm. The catalysed reaction is AMP + diphosphate = 5-phospho-alpha-D-ribose 1-diphosphate + adenine. The protein operates within purine metabolism; AMP biosynthesis via salvage pathway; AMP from adenine: step 1/1. Its function is as follows. Catalyzes a salvage reaction resulting in the formation of AMP, that is energically less costly than de novo synthesis. This Staphylococcus carnosus (strain TM300) protein is Adenine phosphoribosyltransferase.